The primary structure comprises 323 residues: 4-hydroxythreonine-4-phosphate dehydrogenase (323 aa).

A substrate-binding site is contributed by Thr-133. A divalent metal cation-binding residues include His-161, His-206, and His-261. Substrate-binding residues include Lys-269, Asn-278, and Arg-287.

Belongs to the PdxA family. In terms of assembly, homodimer. It depends on Zn(2+) as a cofactor. The cofactor is Mg(2+). Co(2+) serves as cofactor.

The protein localises to the cytoplasm. It carries out the reaction 4-(phosphooxy)-L-threonine + NAD(+) = 3-amino-2-oxopropyl phosphate + CO2 + NADH. It functions in the pathway cofactor biosynthesis; pyridoxine 5'-phosphate biosynthesis; pyridoxine 5'-phosphate from D-erythrose 4-phosphate: step 4/5. In terms of biological role, catalyzes the NAD(P)-dependent oxidation of 4-(phosphooxy)-L-threonine (HTP) into 2-amino-3-oxo-4-(phosphooxy)butyric acid which spontaneously decarboxylates to form 3-amino-2-oxopropyl phosphate (AHAP). This Xanthomonas axonopodis pv. citri (strain 306) protein is 4-hydroxythreonine-4-phosphate dehydrogenase.